Reading from the N-terminus, the 297-residue chain is 3-methyl-2-oxobutanoate hydroxymethyltransferase (297 aa).

Polar residues predominate over residues 1-15 (MSEQISEQSEQNVYG). Positions 1-40 (MSEQISEQSEQNVYGASSPVPAGESSPSAASAPRTKVRTH) are disordered. The span at 16-33 (ASSPVPAGESSPSAASAP) shows a compositional bias: low complexity. 2 residues coordinate Mg(2+): aspartate 78 and aspartate 117. 3-methyl-2-oxobutanoate-binding positions include 78–79 (DS), aspartate 117, and lysine 147. Glutamate 149 contributes to the Mg(2+) binding site. Glutamate 215 acts as the Proton acceptor in catalysis.

This sequence belongs to the PanB family. In terms of assembly, homodecamer; pentamer of dimers. It depends on Mg(2+) as a cofactor.

Its subcellular location is the cytoplasm. It catalyses the reaction 3-methyl-2-oxobutanoate + (6R)-5,10-methylene-5,6,7,8-tetrahydrofolate + H2O = 2-dehydropantoate + (6S)-5,6,7,8-tetrahydrofolate. It functions in the pathway cofactor biosynthesis; (R)-pantothenate biosynthesis; (R)-pantoate from 3-methyl-2-oxobutanoate: step 1/2. Functionally, catalyzes the reversible reaction in which hydroxymethyl group from 5,10-methylenetetrahydrofolate is transferred onto alpha-ketoisovalerate to form ketopantoate. The protein is 3-methyl-2-oxobutanoate hydroxymethyltransferase of Mycobacterium marinum (strain ATCC BAA-535 / M).